Here is a 172-residue protein sequence, read N- to C-terminus: Peroxiredoxin AHP1 (172 aa).

A Thioredoxin domain is found at 4 to 171 (LQPGDSFPAN…VLTVLGNQGK (168 aa)). Residue lysine 44 forms a Glycyl lysine isopeptide (Lys-Gly) (interchain with G-Cter in URM1) linkage. Cysteine 60 acts as the Cysteine sulfenic acid (-SOH) intermediate in catalysis. Cysteine 60 carries the post-translational modification Cysteine persulfide. Residues lysine 63, lysine 99, lysine 141, lysine 156, and lysine 171 each participate in a glycyl lysine isopeptide (Lys-Gly) (interchain with G-Cter in URM1) cross-link.

This sequence belongs to the peroxiredoxin family. Prx5 subfamily. As to quaternary structure, homodimer; disulfide-linked, upon oxidation. Conjugated to URM1, a ubiquitin-like protein, in response to oxidative stresses. The attachment of URM1 to lysine residues exclusively depends on the presence of a peroxidatic cysteine in the target protein, with low specificity for the particular residue, motif, or structural context at which urmylation can occur. The URM1-conjugation reaction is mechanistically and directly coupled to the process of cysteine persulfidation, transfering the sulfur atom of the URM1 thiocarboxyl group to redox-active cysteine residues in the target protein if it is exposed to oxidative conditions. Post-translationally, persulfidated on specific redox-active cysteine residues. Persulfidation (also called protein S-sulfhydration) may provide a molecular mechanism that enables cells to protect vulnerable cysteine residues from reactive oxygen species (ROS) under stress conditions.

The protein resides in the cytoplasm. The enzyme catalyses a hydroperoxide + [thioredoxin]-dithiol = an alcohol + [thioredoxin]-disulfide + H2O. Its function is as follows. Thiol-specific peroxidase that catalyzes the reduction of hydrogen peroxide and organic hydroperoxides to water and alcohols, respectively. Plays a role in cell protection against oxidative stress by detoxifying peroxides and as sensor of hydrogen peroxide-mediated signaling events. Preferentially eliminates organic peroxides rather than hydrogen peroxide. Relays alkyl hydroperoxides as a signal to the transcription factor CAD1/YAP2 by inducing the formation of intramolecular disulfide bonds in CAD1, which causes its nuclear accumulation and activation. Involved in cellular Mn(2+) homeostasis. In Chaetomium thermophilum (strain DSM 1495 / CBS 144.50 / IMI 039719) (Thermochaetoides thermophila), this protein is Peroxiredoxin AHP1 (AHP1).